A 418-amino-acid chain; its full sequence is Equilibrative nucleotide transporter 3 (418 aa).

Helical transmembrane passes span 20–40 (MVVC…MLTI), 56–76 (VLTL…AYHE), 86–106 (LIGY…DLAT), 112–132 (IGPY…DATV), 142–162 (LMCP…GALT), 186–206 (MFLA…AYVF), 264–284 (YAVN…GFLY), 291–311 (GLGD…DLVG), 326–346 (KLIT…YFTA), 353–373 (WMIM…VCIM), and 392–412 (LVIF…LWLI).

The protein belongs to the SLC29A/ENT transporter (TC 2.A.57) family. As to expression, expressed in root tips, vasculature of roots and leaves, and meristems of leaf primordia. Expressed in flowers and siliques.

The protein localises to the cell membrane. In terms of biological role, nucleoside transporter that functions as a pyrimidine nucleoside carrier in all organs. Has high affinity for adenosine and uridine when expressed in a heterologous system (yeast). Mediates proton-dependent adenosine or uridine transport in Xenopus oocytes. The protein is Equilibrative nucleotide transporter 3 of Arabidopsis thaliana (Mouse-ear cress).